A 403-amino-acid polypeptide reads, in one-letter code: Soluble calcium-activated nucleotidase 1 (403 aa).

The Cytoplasmic segment spans residues 1–44 (MPIQPFDQREWNEPMHSLRISVGGLPVLASMTKATDPRFRPRWR). Residues 45–61 (VILTSFVGAALLWLLYS) form a helical; Signal-anchor for type II membrane protein membrane-spanning segment. The Lumenal segment spans residues 62 to 403 (HHQTPVSGRP…SVKYEGIEFI (342 aa)). Asparagine 90 is a glycosylation site (N-linked (GlcNAc...) asparagine). Ca(2+) contacts are provided by serine 170, aspartate 171, glutamate 217, glutamate 286, serine 347, and glutamate 398.

Belongs to the apyrase family. As to quaternary structure, monomer. Homodimer; dimerization is Ca(2+)-dependent. Ca(2+) is required as a cofactor. As to expression, detected in intestine, thymus, heart, lung, spleen, kidney, liver, testis, skeletal muscle and brain.

Its subcellular location is the endoplasmic reticulum membrane. The protein localises to the golgi apparatus. It localises to the golgi stack membrane. It carries out the reaction a ribonucleoside 5'-diphosphate + H2O = a ribonucleoside 5'-phosphate + phosphate + H(+). In terms of biological role, calcium-dependent nucleotidase with a preference for UDP. The order of activity with different substrates is UDP &gt; GDP &gt; IDP &gt;&gt; UTP &gt; CDP = GTP = ITP. Has very low activity towards ADP and even lower activity towards ATP. Does not hydrolyze AMP and GMP. Involved in proteoglycan synthesis. This chain is Soluble calcium-activated nucleotidase 1 (Cant1), found in Rattus norvegicus (Rat).